The chain runs to 169 residues: MQDAITAILNRYDLTGRYLDKTAVGQLESFFSSGLDRIKIAEIINDQATNILKEAAAQLYEEQPELLRPGGNSYTTRRYAACLRDIEYYLRYASYALVSGSTNILDQRVLNGLKDTYNSLSVPVAPTVRSIQLLQEIIEEELDLQSIKRTDIIQEPFQHLINALSEQDL.

Residue N72 is modified to N4-methylasparagine. C82 lines the (2R,3E)-phycocyanobilin pocket.

The protein belongs to the phycobiliprotein family. In terms of assembly, heterodimer of an alpha and a beta chain. Contains one covalently linked bilin chromophore.

The protein resides in the plastid. The protein localises to the chloroplast thylakoid membrane. In terms of biological role, light-harvesting photosynthetic bile pigment-protein from the phycobiliprotein complex. Allophycocyanin has a maximum absorption at approximately 650 nanometers. The protein is Allophycocyanin subunit beta-18 (apcF) of Pyropia yezoensis (Susabi-nori).